Here is a 207-residue protein sequence, read N- to C-terminus: 2,3-bisphosphoglycerate-dependent phosphoglycerate mutase (207 aa).

Residues 10–17 (RHGQSEWN), 23–24 (TG), Arg-62, 89–92 (ERDY), Lys-100, 116–117 (RR), and 160–161 (GN) each bind substrate. The active-site Tele-phosphohistidine intermediate is the His-11. The Proton donor/acceptor role is filled by Glu-89.

Belongs to the phosphoglycerate mutase family. BPG-dependent PGAM subfamily. As to quaternary structure, homodimer.

It catalyses the reaction (2R)-2-phosphoglycerate = (2R)-3-phosphoglycerate. It participates in carbohydrate degradation; glycolysis; pyruvate from D-glyceraldehyde 3-phosphate: step 3/5. Functionally, catalyzes the interconversion of 2-phosphoglycerate and 3-phosphoglycerate. The sequence is that of 2,3-bisphosphoglycerate-dependent phosphoglycerate mutase from Afipia carboxidovorans (strain ATCC 49405 / DSM 1227 / KCTC 32145 / OM5) (Oligotropha carboxidovorans).